The sequence spans 299 residues: Bifunctional methyltransferase-like/endonuclease (299 aa).

A probable methylated-DNA--protein-cysteine methyltransferase-like region spans residues 1 to 80; it reads MLSSKLLDIN…NLIVSPMQKA (80 aa). Positions 81–299 are endonuclease V; it reads LLEKEVKIIG…GRGDSNPGRD (219 aa). Mg(2+) is bound by residues D135 and N197.

It in the N-terminal section; belongs to the MGMT family. This sequence in the C-terminal section; belongs to the endonuclease V family. Mg(2+) is required as a cofactor.

Its subcellular location is the cytoplasm. The catalysed reaction is Endonucleolytic cleavage at apurinic or apyrimidinic sites to products with a 5'-phosphate.. DNA repair enzyme involved in the repair of deaminated bases. Selectively cleaves double-stranded DNA at the second phosphodiester bond 3' to a deoxyinosine leaving behind the intact lesion on the nicked DNA. The polypeptide is Bifunctional methyltransferase-like/endonuclease (Nanoarchaeum equitans (strain Kin4-M)).